Reading from the N-terminus, the 583-residue chain is Laminarase-resistance protein LRE1 (583 aa).

The segment covering 1 to 24 (MPNTHTQHVQISEPNPVNTLSTPS) has biased composition (polar residues). Disordered regions lie at residues 1-31 (MPNTHTQHVQISEPNPVNTLSTPSKRGHRHR) and 330-380 (LKDN…HMQH). Composition is skewed to basic and acidic residues over residues 332 to 342 (DNPRYAKDGYP) and 354 to 366 (LDSDKRQDFSGES). Phosphoserine occurs at positions 393 and 398. Residues 457–486 (SCTPDGKEEMNRLKSNDSNEYSKSEGQIRT) form a disordered region. Positions 461 to 479 (DGKEEMNRLKSNDSNEYSK) are enriched in basic and acidic residues. Residues Ser516 and Ser552 each carry the phosphoserine modification.

Post-translationally, phosphorylated by CDC28/CDK1.

Overexpression affects chitinase expression, cell separation and budding pattern, and increases trehalose accumulation and heat resistance by inhibiting protein kinase CBK1. Overexpression also suppresses temperature-induced hyperosmosensitivity and sensitivity to cell wall degrading enzymes. Overexpression of both LRE1 and PBN1 confers resistance to laminarinase. This chain is Laminarase-resistance protein LRE1 (LRE1), found in Saccharomyces cerevisiae (strain ATCC 204508 / S288c) (Baker's yeast).